The sequence spans 603 residues: Isovalerate--CoA ligase AAE2 (603 aa).

Belongs to the ATP-dependent AMP-binding enzyme family. In terms of tissue distribution, expressed at low levels in leaves, flowers and developing seeds.

The enzyme catalyses 3-methylbutanoate + ATP + CoA = 3-methylbutanoyl-CoA + AMP + diphosphate. The catalysed reaction is hexanoate + ATP + CoA = hexanoyl-CoA + AMP + diphosphate. It carries out the reaction butanoate + ATP + CoA = butanoyl-CoA + AMP + diphosphate. It catalyses the reaction pentanoate + ATP + CoA = pentanoyl-CoA + AMP + diphosphate. The enzyme catalyses 3-methylpentanoate + ATP + CoA = 3-methylpentanoyl-CoA + AMP + diphosphate. The catalysed reaction is 4-methylpentanoate + ATP + CoA = 4-methylpentanoyl-CoA + AMP + diphosphate. In terms of biological role, catalyzes the ligation of CoA on isovalerate to produce 3-methylbutanoyl-CoA. Can also use butanoate, pentanoate, hexanoate, 3-methylpentanoate and 4-methylpentanoate as substrates with a lower efficiency. The protein is Isovalerate--CoA ligase AAE2 of Arabidopsis thaliana (Mouse-ear cress).